We begin with the raw amino-acid sequence, 361 residues long: 3-dehydroquinate synthase (361 aa).

NAD(+)-binding positions include N41, 70–75 (DGEQYK), 104–108 (GVIGD), 128–129 (TT), K141, K150, 150–151 (KN), and 168–171 (CLTT). The Zn(2+) site is built by E183, H246, and H263.

Belongs to the sugar phosphate cyclases superfamily. Dehydroquinate synthase family. NAD(+) is required as a cofactor. It depends on Co(2+) as a cofactor. Requires Zn(2+) as cofactor.

Its subcellular location is the cytoplasm. The catalysed reaction is 7-phospho-2-dehydro-3-deoxy-D-arabino-heptonate = 3-dehydroquinate + phosphate. The protein operates within metabolic intermediate biosynthesis; chorismate biosynthesis; chorismate from D-erythrose 4-phosphate and phosphoenolpyruvate: step 2/7. Catalyzes the conversion of 3-deoxy-D-arabino-heptulosonate 7-phosphate (DAHP) to dehydroquinate (DHQ). In Vibrio cholerae serotype O1 (strain ATCC 39315 / El Tor Inaba N16961), this protein is 3-dehydroquinate synthase.